A 111-amino-acid polypeptide reads, in one-letter code: Large ribosomal subunit protein uL24 (111 aa).

The protein belongs to the universal ribosomal protein uL24 family. Part of the 50S ribosomal subunit.

In terms of biological role, one of two assembly initiator proteins, it binds directly to the 5'-end of the 23S rRNA, where it nucleates assembly of the 50S subunit. Functionally, one of the proteins that surrounds the polypeptide exit tunnel on the outside of the subunit. This is Large ribosomal subunit protein uL24 from Bifidobacterium animalis subsp. lactis (strain AD011).